A 300-amino-acid polypeptide reads, in one-letter code: Telomere repeat-binding factor 1 (300 aa).

The HTH myb-type domain occupies 1 to 58 (MGAPKQKWTQEEESALKSGVIKHGPGKWRTILKDPEFSGVLYLRSNVDLKDKWRNMSV). Positions 28–57 (WRTILKDPEFSGVLYLRSNVDLKDKWRNMS) form a DNA-binding region, H-T-H motif. Disordered stretches follow at residues 93–119 (LQSD…RPNV) and 185–213 (NSTP…PSPK). The 69-residue stretch at 117-185 (PNVRLDSLIM…KVKRKYRIPN (69 aa)) folds into the H15 domain. Positions 241-290 (EAAAVAAQAVAEAEAAMAEAEEAAKEAEAAEAEAEAAQAFAEEASKTLKG) form a coiled coil.

This sequence belongs to the histone H1/H5 family. SMH subfamily. As to quaternary structure, forms a homodimer and heterodimers with TRB2 or TRB3. Interacts with POT1b, TRB2 and TRB3 through its H15 domain.

It is found in the nucleus. Its subcellular location is the nucleolus. The protein resides in the chromosome. Its function is as follows. Binds preferentially double-stranded telomeric repeats. The polypeptide is Telomere repeat-binding factor 1 (TRB1) (Arabidopsis thaliana (Mouse-ear cress)).